The chain runs to 466 residues: DNA polymerase delta subunit 3 (466 aa).

Ala2 is modified (N-acetylalanine). Disordered regions lie at residues 169 to 188 (NNEL…VSQQ) and 199 to 232 (KAAA…PGKG). Residues 206–217 (ETNKETKTEAKE) show a composition bias toward basic and acidic residues. A Glycyl lysine isopeptide (Lys-Gly) (interchain with G-Cter in SUMO); alternate cross-link involves residue Lys258. A Glycyl lysine isopeptide (Lys-Gly) (interchain with G-Cter in SUMO2); alternate cross-link involves residue Lys258. A Glycyl lysine isopeptide (Lys-Gly) (interchain with G-Cter in SUMO2) cross-link involves residue Lys261. Disordered regions lie at residues 274–393 (KLAT…KTYL) and 406–466 (ESES…FQRK). Thr277 carries the post-translational modification Phosphothreonine. Residues 286–296 (KKAEPVKVLQK) show a composition bias toward basic and acidic residues. At Ser307 the chain carries Phosphoserine. Positions 349–361 (PSPPPPPSPPLEP) are enriched in pro residues. 2 positions are modified to phosphoserine: Ser407 and Ser409. Thr411 bears the Phosphothreonine mark. Ser413 bears the Phosphoserine mark. The span at 432–441 (VKKEPREERK) shows a compositional bias: basic and acidic residues. Lys433 participates in a covalent cross-link: Glycyl lysine isopeptide (Lys-Gly) (interchain with G-Cter in SUMO); alternate. Residue Lys433 forms a Glycyl lysine isopeptide (Lys-Gly) (interchain with G-Cter in SUMO2); alternate linkage. The span at 455-466 (RQVSITGFFQRK) shows a compositional bias: polar residues. The PIP-box signature appears at 456-463 (QVSITGFF). Ser458 is subject to Phosphoserine.

Component of both the DNA polymerase delta and DNA polymerase zeta complexes. The tetrameric DNA polymerase delta complex (Pol-delta4), which consists of POLD1/p125, POLD2/p50, POLD3/p66/p68 and POLD4/p12, with POLD1 bearing DNA polymerase and 3' to 5' proofreading exonuclease activities. Within this complex, directly interacts with POLD2. Following stress caused by DNA damaging agents or by replication stress, POLD4 is degraded and Pol-delta4 is converted into a trimeric form of the complex (Pol-delta3), which consists of POLD1, POLD2 and POLD3. Pol-delta3 is the major form occurring at S phase replication sites, as well as DNA damage sites. Directly interacts with PCNA, as do POLD1 and POLD4; this interaction stimulates Pol-delta polymerase activity. POLD3 phosphorylation at Ser-458 impairs PCNA binding. Component of the DNA polymerase zeta complex (POLZ), which consists of REV3L, MAD2L2, POLD2 and POLD3, with REV3L bearing DNA polymerase catalytic activity. The DNA polymerase delta complex interacts with POLDIP2; this interaction is probably mediated through direct binding to POLD2. Post-translationally, ubiquitinated, but not targeted to the proteasome. Sumoylated. Sumoylation with SUMO3 may be predominant. Phosphorylation at Ser-458 is catalyzed in vitro by PKA. It is thought to decrease the affinity for PCNA and Pol-delta4 processivity. Can also be phosphorylated in vitro by CDK1-cyclin-A complex, as well as CDK2-cyclin-A and CDK2-cyclin-E complexes. PCNA interferes with CDK-cyclin phosphorylation.

It localises to the cytoplasm. The protein resides in the nucleus. Its function is as follows. Accessory component of both the DNA polymerase delta complex and the DNA polymerase zeta complex. As a component of the trimeric and tetrameric DNA polymerase delta complexes (Pol-delta3 and Pol-delta4, respectively), plays a role in high fidelity genome replication, including in lagging strand synthesis, and repair. Required for optimal Pol-delta activity. Stabilizes the Pol-delta complex and plays a major role in Pol-delta stimulation by PCNA. Pol-delta3 and Pol-delta4 are characterized by the absence or the presence of POLD4. They exhibit differences in catalytic activity. Most notably, Pol-delta3 shows higher proofreading activity than Pol-delta4. Although both Pol-delta3 and Pol-delta4 process Okazaki fragments in vitro, Pol-delta3 may also be better suited to fulfill this task, exhibiting near-absence of strand displacement activity compared to Pol-delta4 and stalling on encounter with the 5'-blocking oligonucleotides. Pol-delta3 idling process may avoid the formation of a gap, while maintaining a nick that can be readily ligated. Along with DNA polymerase kappa, DNA polymerase delta carries out approximately half of nucleotide excision repair (NER) synthesis following UV irradiation. In this context, POLD3, along with PCNA and RFC1-replication factor C complex, is required to recruit POLD1, the catalytic subunit of the polymerase delta complex, to DNA damage sites. Under conditions of DNA replication stress, required for the repair of broken replication forks through break-induced replication (BIR). Involved in the translesion synthesis (TLS) of templates carrying O6-methylguanine or abasic sites performed by Pol-delta4, independently of DNA polymerase zeta (REV3L) or eta (POLH). Facilitates abasic site bypass by DNA polymerase delta by promoting extension from the nucleotide inserted opposite the lesion. Also involved in TLS, as a component of the tetrameric DNA polymerase zeta complex. Along with POLD2, dramatically increases the efficiency and processivity of DNA synthesis of the DNA polymerase zeta complex compared to the minimal zeta complex, consisting of only REV3L and REV7. The polypeptide is DNA polymerase delta subunit 3 (POLD3) (Homo sapiens (Human)).